The sequence spans 258 residues: Chymotrypsin-like elastase family member 1 (258 aa).

The signal sequence occupies residues 1-8 (MLVLYGHS). The propeptide at 9–18 (TQDLPETNAR) is activation peptide. Residues 19-256 (VVGGTEAGRN…YISWINNVIA (238 aa)) form the Peptidase S1 domain. A disulfide bridge links Cys48 with Cys64. His63 serves as the catalytic Charge relay system. Positions 77, 79, 82, and 87 each coordinate Ca(2+). N-linked (GlcNAc...) asparagine glycosylation occurs at Asn79. Asp111 serves as the catalytic Charge relay system. Cystine bridges form between Cys145–Cys212, Cys176–Cys192, and Cys202–Cys232. Residue Ser206 is the Charge relay system of the active site. Asn233 is a glycosylation site (N-linked (GlcNAc...) asparagine).

The protein belongs to the peptidase S1 family. Elastase subfamily. Ca(2+) serves as cofactor. In terms of tissue distribution, basal layers of epidermis (at protein level). Not expressed in the pancreas.

It is found in the secreted. It catalyses the reaction Hydrolysis of proteins, including elastin. Preferential cleavage: Ala-|-Xaa.. Serine proteases that hydrolyze many proteins in addition to elastin. In Homo sapiens (Human), this protein is Chymotrypsin-like elastase family member 1 (CELA1).